A 337-amino-acid polypeptide reads, in one-letter code: Large ribosomal subunit protein uL3 (337 aa).

The protein belongs to the universal ribosomal protein uL3 family. In terms of assembly, part of the 50S ribosomal subunit. Forms a cluster with proteins L14 and L24e.

Its function is as follows. One of the primary rRNA binding proteins, it binds directly near the 3'-end of the 23S rRNA, where it nucleates assembly of the 50S subunit. In Methanosphaerula palustris (strain ATCC BAA-1556 / DSM 19958 / E1-9c), this protein is Large ribosomal subunit protein uL3.